The chain runs to 244 residues: UDP-2,3-diacylglucosamine hydrolase (244 aa).

5 residues coordinate Mn(2+): aspartate 8, histidine 10, aspartate 41, asparagine 79, and histidine 114. Substrate is bound at residue 79–80; that stretch reads NR. Residues aspartate 122, serine 160, asparagine 164, lysine 167, and histidine 195 each coordinate substrate. Histidine 195 and histidine 197 together coordinate Mn(2+).

It belongs to the LpxH family. Mn(2+) is required as a cofactor.

The protein localises to the cell inner membrane. The catalysed reaction is UDP-2-N,3-O-bis[(3R)-3-hydroxytetradecanoyl]-alpha-D-glucosamine + H2O = 2-N,3-O-bis[(3R)-3-hydroxytetradecanoyl]-alpha-D-glucosaminyl 1-phosphate + UMP + 2 H(+). It participates in glycolipid biosynthesis; lipid IV(A) biosynthesis; lipid IV(A) from (3R)-3-hydroxytetradecanoyl-[acyl-carrier-protein] and UDP-N-acetyl-alpha-D-glucosamine: step 4/6. Functionally, hydrolyzes the pyrophosphate bond of UDP-2,3-diacylglucosamine to yield 2,3-diacylglucosamine 1-phosphate (lipid X) and UMP by catalyzing the attack of water at the alpha-P atom. Involved in the biosynthesis of lipid A, a phosphorylated glycolipid that anchors the lipopolysaccharide to the outer membrane of the cell. This Marinobacter nauticus (strain ATCC 700491 / DSM 11845 / VT8) (Marinobacter aquaeolei) protein is UDP-2,3-diacylglucosamine hydrolase.